The primary structure comprises 458 residues: tRNA modification GTPase MnmE (458 aa).

Residues arginine 30, glutamate 90, and lysine 129 each contribute to the (6S)-5-formyl-5,6,7,8-tetrahydrofolate site. The 155-residue stretch at 225 to 379 (GLSICLIGCP…LHQTIDTIIW (155 aa)) folds into the TrmE-type G domain. A K(+)-binding site is contributed by asparagine 235. Residues 235 to 240 (NVGKSS), 254 to 260 (SPIPGTT), and 279 to 282 (DTAG) contribute to the GTP site. Serine 239 is a Mg(2+) binding site. K(+)-binding residues include serine 254, isoleucine 256, and threonine 259. Position 260 (threonine 260) interacts with Mg(2+). Residue lysine 458 coordinates (6S)-5-formyl-5,6,7,8-tetrahydrofolate.

Belongs to the TRAFAC class TrmE-Era-EngA-EngB-Septin-like GTPase superfamily. TrmE GTPase family. In terms of assembly, homodimer. Heterotetramer of two MnmE and two MnmG subunits. Requires K(+) as cofactor.

The protein localises to the cytoplasm. Exhibits a very high intrinsic GTPase hydrolysis rate. Involved in the addition of a carboxymethylaminomethyl (cmnm) group at the wobble position (U34) of certain tRNAs, forming tRNA-cmnm(5)s(2)U34. This is tRNA modification GTPase MnmE from Protochlamydia amoebophila (strain UWE25).